The sequence spans 101 residues: Urease subunit beta (101 aa).

The protein belongs to the urease beta subunit family. In terms of assembly, heterotrimer of UreA (gamma), UreB (beta) and UreC (alpha) subunits. Three heterotrimers associate to form the active enzyme.

It is found in the cytoplasm. It carries out the reaction urea + 2 H2O + H(+) = hydrogencarbonate + 2 NH4(+). Its pathway is nitrogen metabolism; urea degradation; CO(2) and NH(3) from urea (urease route): step 1/1. The protein is Urease subunit beta of Thermosynechococcus vestitus (strain NIES-2133 / IAM M-273 / BP-1).